Reading from the N-terminus, the 311-residue chain is Nod factor export ATP-binding protein I (311 aa).

An ABC transporter domain is found at 13-243 (IDLAGVSKSY…QIGCPVIEIY (231 aa)). 45 to 52 (GPNGAGKS) is a binding site for ATP.

This sequence belongs to the ABC transporter superfamily. Lipooligosaccharide exporter (TC 3.A.1.102) family. As to quaternary structure, the complex is composed of two ATP-binding proteins (NodI) and two transmembrane proteins (NodJ).

It localises to the cell inner membrane. Its function is as follows. Part of the ABC transporter complex NodIJ involved in the export of the nodulation factors (Nod factors), the bacterial signal molecules that induce symbiosis and subsequent nodulation induction. Nod factors are LCO (lipo-chitin oligosaccharide), a modified beta-1,4-linked N-acetylglucosamine oligosaccharide. This subunit is responsible for energy coupling to the transport system. The sequence is that of Nod factor export ATP-binding protein I from Rhizobium leguminosarum bv. viciae.